The sequence spans 448 residues: Methylenetetrahydrofolate--tRNA-(uracil-5-)-methyltransferase TrmFO (448 aa).

Residue 13-18 (GAGLAG) participates in FAD binding.

Belongs to the MnmG family. TrmFO subfamily. The cofactor is FAD.

Its subcellular location is the cytoplasm. The enzyme catalyses uridine(54) in tRNA + (6R)-5,10-methylene-5,6,7,8-tetrahydrofolate + NADH + H(+) = 5-methyluridine(54) in tRNA + (6S)-5,6,7,8-tetrahydrofolate + NAD(+). It carries out the reaction uridine(54) in tRNA + (6R)-5,10-methylene-5,6,7,8-tetrahydrofolate + NADPH + H(+) = 5-methyluridine(54) in tRNA + (6S)-5,6,7,8-tetrahydrofolate + NADP(+). Functionally, catalyzes the folate-dependent formation of 5-methyl-uridine at position 54 (M-5-U54) in all tRNAs. The protein is Methylenetetrahydrofolate--tRNA-(uracil-5-)-methyltransferase TrmFO of Streptococcus pyogenes serotype M5 (strain Manfredo).